The sequence spans 547 residues: Glucose-6-phosphate isomerase (547 aa).

E353 acts as the Proton donor in catalysis. Active-site residues include H384 and K512.

It belongs to the GPI family.

The protein localises to the cytoplasm. It catalyses the reaction alpha-D-glucose 6-phosphate = beta-D-fructose 6-phosphate. It participates in carbohydrate biosynthesis; gluconeogenesis. The protein operates within carbohydrate degradation; glycolysis; D-glyceraldehyde 3-phosphate and glycerone phosphate from D-glucose: step 2/4. Catalyzes the reversible isomerization of glucose-6-phosphate to fructose-6-phosphate. The sequence is that of Glucose-6-phosphate isomerase from Campylobacter jejuni subsp. doylei (strain ATCC BAA-1458 / RM4099 / 269.97).